A 216-amino-acid polypeptide reads, in one-letter code: Ras-related protein YPTC6 (216 aa).

Glycine 19–serine 26 lines the GTP pocket. Positions serine 41–phenylalanine 49 match the Effector region motif. Residues aspartate 67–glutamine 71 and asparagine 125–aspartate 128 each bind GTP. 2 S-geranylgeranyl cysteine lipidation sites follow: cysteine 214 and cysteine 215.

This sequence belongs to the small GTPase superfamily. Rab family.

The protein localises to the cell membrane. The protein is Ras-related protein YPTC6 (YPTC6) of Chlamydomonas reinhardtii (Chlamydomonas smithii).